Consider the following 64-residue polypeptide: GRDAYIADDKNCVYTCAKNSYCNNECTKNGAESGYCQWLGKYGNGCWCKNLPDKVPIRIPGPCR.

4 cysteine pairs are disulfide-bonded: C12–C63, C16–C36, C22–C46, and C26–C48. R64 is subject to Arginine amide.

This sequence belongs to the long (4 C-C) scorpion toxin superfamily. Sodium channel inhibitor family. Alpha subfamily. Expressed by the venom gland.

The protein resides in the secreted. This non-amidated recombinant toxin slows fast inactivation on Nav1.1/SCN1A (EC(50)=52.8 nM), Nav1.4/SN4A (EC(50)=32 nM), Nav1.5/SCN5A (EC(50)=116.7 nM), Nav1.6/SCN8A (EC(50)=46.3 nM), and Nav1.7/SCN9A (EC(50)=147.4 nM) voltage-gated sodium channels. On Nav1.1/SCN1A channel, acts as an agonist by inducing a shift in both the voltage dependence of channel inactivation (alpha-toxin activity) and activation (beta-toxin activity). This chain is Delta-buthitoxin-Hj2a, found in Hottentotta judaicus (Black scorpion).